Consider the following 359-residue polypeptide: GATA-binding factor 1-A (359 aa).

A disordered region spans residues 1 to 21; it reads MDYTTLTTQDPDPNYTESGLA. 2 consecutive GATA-type zinc fingers follow at residues 178–202 and 232–256; these read CVNC…CNAC and CSNC…CNAC. 2 disordered regions span residues 271 to 311 and 323 to 359; these read MKKE…SPYP and PMGH…VTPP. Residues 279–291 show a composition bias toward basic residues; it reads RNRKVSSRSKKKK.

As to expression, expressed in the developing ventral blood island, and in both tadpole and adult erythrocytes.

The protein resides in the nucleus. In terms of biological role, transcription factor that acts synergistically with tal1/scl and lmo2 to specify embryonic dorsal mesoderm to a hematopoietic fate. This chain is GATA-binding factor 1-A (gata1-a), found in Xenopus laevis (African clawed frog).